Consider the following 2118-residue polypeptide: Separin (2118 aa).

Serine 1121 is modified (phosphoserine). Positions lysine 1309 to isoleucine 1318 are enriched in basic residues. Positions lysine 1309–glycine 1352 are disordered. 2 positions are modified to phosphoserine: serine 1391 and serine 1394. The tract at residues glutamate 1408 to serine 1428 is disordered. Serine 1504 is modified (phosphoserine). Residues proline 1941–leucine 2036 enclose the Peptidase C50 domain. The active site involves cysteine 2025.

As to quaternary structure, interacts with PTTG1. Interacts with RAD21. In terms of processing, autocleaves. This function, which is not essential for its protease activity, is unknown. Post-translationally, phosphorylated by CDK1. There is 8 Ser/Thr phosphorylation sites. Among them, only Ser-1121 phosphorylation is the major site, which conducts to the enzyme inactivation.

Its subcellular location is the cytoplasm. The protein localises to the nucleus. It catalyses the reaction All bonds known to be hydrolyzed by this endopeptidase have arginine in P1 and an acidic residue in P4. P6 is often occupied by an acidic residue or by a hydroxy-amino-acid residue, the phosphorylation of which enhances cleavage.. With respect to regulation, regulated by at least two independent mechanisms. First, it is inactivated via its interaction with securin/PTTG1, which probably covers its active site. The association with PTTG1 is not only inhibitory, since PTTG1 is also required for activating it, the enzyme being inactive in cells in which PTTG1 is absent. PTTG1 degradation at anaphase, liberates it and triggers RAD21 cleavage. Second, phosphorylation at Ser-1121 inactivates it. The complete phosphorylation during mitosis, is removed when cells undergo anaphase. Activation of the enzyme at the metaphase-anaphase transition probably requires the removal of both securin and inhibitory phosphate. Caspase-like protease, which plays a central role in the chromosome segregation by cleaving the SCC1/RAD21 subunit of the cohesin complex at the onset of anaphase. During most of the cell cycle, it is inactivated by different mechanisms. The protein is Separin (Espl1) of Mus musculus (Mouse).